We begin with the raw amino-acid sequence, 288 residues long: MFILPPPQEALLGAHTSAAGGLHNALYEGRDIGATTVQLFTANQRQWKRRTLTQEMVDQFRIALNETSLSYIMSHAGYLNNPGAPNPEILEKTRVCMHQEIADCISLGISFVNFHPGAALSDSKESCLDRTIASFSQMAPLFENNPPLVVLLETTAGQGSLIGSSFEELAYLIQGIKAHIPIGVCLDTCHIFAAGYDISSVAGWEQVLKHFDAVIGLSFLRAIHLNDSVFALGKNKDRHAPIGEGCIGSDSFCFLMQDERTRMLPKYLETPGGPDLWTKEIRYLQKVC.

Residues His-75, His-115, Glu-153, Asp-187, His-190, His-224, Asp-237, His-239, and Glu-269 each coordinate Zn(2+).

This sequence belongs to the AP endonuclease 2 family. The cofactor is Zn(2+).

It carries out the reaction Endonucleolytic cleavage to 5'-phosphooligonucleotide end-products.. Its function is as follows. Endonuclease IV plays a role in DNA repair. It cleaves phosphodiester bonds at apurinic or apyrimidinic (AP) sites, generating a 3'-hydroxyl group and a 5'-terminal sugar phosphate. This chain is Probable endonuclease 4, found in Chlamydia trachomatis serovar A (strain ATCC VR-571B / DSM 19440 / HAR-13).